The chain runs to 309 residues: Zinc finger protein-like 1 homolog (309 aa).

The segment at 1–43 adopts a B box-type; degenerate zinc-finger fold; sequence MGLCKCPKRKVTNLFCYEHRVNVCEFCLVDNHPNCVVQSYLTW. The RING-type; atypical zinc finger occupies 53 to 101; that stretch reads CSLCKTTLAEGDTIRLNCLHLLHWKCFDEWAANFPATTAPAGYRCPCCS. Residues 200–221 are disordered; it reads GAESSSDTRPLLQLRDADNEEN. The chain crosses the membrane as a helical span at residues 254 to 274; sequence KIALFVIFLAVLALITIIMVM.

Belongs to the ZFPL1 family.

It is found in the membrane. In Caenorhabditis elegans, this protein is Zinc finger protein-like 1 homolog.